A 271-amino-acid polypeptide reads, in one-letter code: Putative pyruvate, phosphate dikinase regulatory protein (271 aa).

An ADP-binding site is contributed by 151–158; it reads GISRTSKT.

This sequence belongs to the pyruvate, phosphate/water dikinase regulatory protein family. PDRP subfamily.

It catalyses the reaction N(tele)-phospho-L-histidyl/L-threonyl-[pyruvate, phosphate dikinase] + ADP = N(tele)-phospho-L-histidyl/O-phospho-L-threonyl-[pyruvate, phosphate dikinase] + AMP + H(+). The catalysed reaction is N(tele)-phospho-L-histidyl/O-phospho-L-threonyl-[pyruvate, phosphate dikinase] + phosphate + H(+) = N(tele)-phospho-L-histidyl/L-threonyl-[pyruvate, phosphate dikinase] + diphosphate. In terms of biological role, bifunctional serine/threonine kinase and phosphorylase involved in the regulation of the pyruvate, phosphate dikinase (PPDK) by catalyzing its phosphorylation/dephosphorylation. The polypeptide is Putative pyruvate, phosphate dikinase regulatory protein (Streptococcus uberis (strain ATCC BAA-854 / 0140J)).